The primary structure comprises 612 residues: Peroxisomal carnitine O-octanoyltransferase (612 aa).

Met-1 bears the N-acetylmethionine mark. An N6-succinyllysine mark is found at Lys-40 and Lys-57. Residue His-327 is the Proton acceptor of the active site. CoA contacts are provided by residues Lys-406 and Lys-410–Asp-417. Lys-406 carries the post-translational modification N6-acetyllysine; alternate. Residue Lys-406 is modified to N6-succinyllysine; alternate. (R)-carnitine is bound by residues Tyr-439, Thr-441, and Thr-452. The short motif at Ala-610–Leu-612 is the Microbody targeting signal element.

Belongs to the carnitine/choline acetyltransferase family.

The protein localises to the peroxisome. The enzyme catalyses octanoyl-CoA + (R)-carnitine = O-octanoyl-(R)-carnitine + CoA. The catalysed reaction is 4,8-dimethylnonanoyl-CoA + (R)-carnitine = O-4,8-dimethylnonanoyl-(R)-carnitine + CoA. Its pathway is lipid metabolism; fatty acid beta-oxidation. Beta-oxidation of fatty acids. The highest activity concerns the C6 to C10 chain length substrate. The protein is Peroxisomal carnitine O-octanoyltransferase (Crot) of Mus musculus (Mouse).